A 163-amino-acid polypeptide reads, in one-letter code: Endoribonuclease YbeY (163 aa).

Zn(2+) is bound by residues His-126, His-130, and His-136.

Belongs to the endoribonuclease YbeY family. Zn(2+) is required as a cofactor.

The protein resides in the cytoplasm. Its function is as follows. Single strand-specific metallo-endoribonuclease involved in late-stage 70S ribosome quality control and in maturation of the 3' terminus of the 16S rRNA. The chain is Endoribonuclease YbeY from Chelativorans sp. (strain BNC1).